The following is a 421-amino-acid chain: Telomeric repeat-binding factor 1 (421 aa).

Residues 1–30 (MAETVSSAARDAPSREGWTDSDSPEQEEVG) form a disordered region. Ala2 bears the N-acetylalanine mark. The TRFH mediates dimerization stretch occupies residues 49–255 (ENAELVAEVE…AATKVVENEK (207 aa)). Lys200 participates in a covalent cross-link: Glycyl lysine isopeptide (Lys-Gly) (interchain with G-Cter in SUMO2). Ser206 is subject to Phosphoserine; by ATM. The interaction with RLIM stretch occupies residues 252–365 (ENEKARTQAS…PDTDDKSGRR (114 aa)). Residues 253-266 (NEKARTQASKDRPD) are compositionally biased toward basic and acidic residues. A disordered region spans residues 253–366 (NEKARTQASK…DTDDKSGRRK (114 aa)). A compositionally biased stretch (polar residues) spans 284-310 (VNGQQSTETEPLVDTVSSIRSHKNALS). A Nuclear localization signal motif is present at residues 313–367 (KHRRAPSDFSRNEARTGTLQCETTMERNRRTSGRNRLCVSENQPDTDDKSGRRKR). Positions 362–419 (SGRRKRQTWLWEEDRILKCGVKKYGEGNWAKILSHYKFNNRTSVMLKDRWRTMKRLKL) constitute an HTH myb-type domain. Residues 390–415 (WAKILSHYKFNNRTSVMLKDRWRTMK) constitute a DNA-binding region (H-T-H motif).

As to quaternary structure, homodimer; can contain both isoforms. Found in a complex with POT1; TINF2 and TNKS1. Interacts with ATM, TINF2, TNKS1, TNKS2, PINX1, NEK2 and MAPRE1. Component of the shelterin complex (telosome) composed of TERF1, TERF2, TINF2, TERF2IP ACD and POT1. Interacts with RLIM (via N-terminus). Interacts with FBXO4. Interaction with TINF2 protects against interaction with FBXO4 and subsequent polyubiquitination and proteasomal degradation. Interacts with GNL3L; this interaction promotes homodimerization. Interacts with TIN2. Interactions with GNL3L and TIN2 are mutually exclusive. Interacts with RTEL1. Interacts with CCDC79/TERB1. Post-translationally, phosphorylated preferentially on Ser-219 in an ATM-dependent manner in response to ionizing DNA damage. ADP-ribosylation by TNKS1 or TNKS2 diminishes its ability to bind to telomeric DNA. In terms of processing, ubiquitinated by RLIM/RNF12, leading to its degradation by the proteasome. Ubiquitinated by a SCF (SKP1-CUL1-F-box protein) ubiquitin-protein ligase complex, leading to its degradation by the proteasome.

The protein localises to the nucleus. The protein resides in the chromosome. It is found in the telomere. It localises to the cytoplasm. Its subcellular location is the cytoskeleton. The protein localises to the spindle. Functionally, binds the telomeric double-stranded 5'-TTAGGG-3' repeat and negatively regulates telomere length. Involved in the regulation of the mitotic spindle. Component of the shelterin complex (telosome) that is involved in the regulation of telomere length and protection. Shelterin associates with arrays of double-stranded 5'-TTAGGG-3' repeats added by telomerase and protects chromosome ends; without its protective activity, telomeres are no longer hidden from the DNA damage surveillance and chromosome ends are inappropriately processed by DNA repair pathways. The protein is Telomeric repeat-binding factor 1 (Terf1) of Mus musculus (Mouse).